The primary structure comprises 398 residues: 8-amino-7-oxononanoate synthase (398 aa).

R23 lines the substrate pocket. 110–111 (GY) contributes to the pyridoxal 5'-phosphate binding site. Residue H135 participates in substrate binding. 3 residues coordinate pyridoxal 5'-phosphate: S181, H209, and T237. K240 is subject to N6-(pyridoxal phosphate)lysine. Residue T354 coordinates substrate.

It belongs to the class-II pyridoxal-phosphate-dependent aminotransferase family. BioF subfamily. As to quaternary structure, homodimer. It depends on pyridoxal 5'-phosphate as a cofactor.

It catalyses the reaction 6-carboxyhexanoyl-[ACP] + L-alanine + H(+) = (8S)-8-amino-7-oxononanoate + holo-[ACP] + CO2. The protein operates within cofactor biosynthesis; biotin biosynthesis. Functionally, catalyzes the decarboxylative condensation of pimeloyl-[acyl-carrier protein] and L-alanine to produce 8-amino-7-oxononanoate (AON), [acyl-carrier protein], and carbon dioxide. The polypeptide is 8-amino-7-oxononanoate synthase (Anaeromyxobacter sp. (strain K)).